A 481-amino-acid chain; its full sequence is Glutamyl-tRNA(Gln) amidotransferase subunit A (481 aa).

Active-site charge relay system residues include Lys-76 and Ser-151. Ser-175 serves as the catalytic Acyl-ester intermediate.

The protein belongs to the amidase family. GatA subfamily. Heterotrimer of A, B and C subunits.

It carries out the reaction L-glutamyl-tRNA(Gln) + L-glutamine + ATP + H2O = L-glutaminyl-tRNA(Gln) + L-glutamate + ADP + phosphate + H(+). In terms of biological role, allows the formation of correctly charged Gln-tRNA(Gln) through the transamidation of misacylated Glu-tRNA(Gln) in organisms which lack glutaminyl-tRNA synthetase. The reaction takes place in the presence of glutamine and ATP through an activated gamma-phospho-Glu-tRNA(Gln). The polypeptide is Glutamyl-tRNA(Gln) amidotransferase subunit A (Neisseria gonorrhoeae (strain ATCC 700825 / FA 1090)).